The chain runs to 289 residues: 2-dehydro-3-deoxyphosphooctonate aldolase (289 aa).

The protein belongs to the KdsA family.

Its subcellular location is the cytoplasm. It carries out the reaction D-arabinose 5-phosphate + phosphoenolpyruvate + H2O = 3-deoxy-alpha-D-manno-2-octulosonate-8-phosphate + phosphate. It functions in the pathway carbohydrate biosynthesis; 3-deoxy-D-manno-octulosonate biosynthesis; 3-deoxy-D-manno-octulosonate from D-ribulose 5-phosphate: step 2/3. The protein operates within bacterial outer membrane biogenesis; lipopolysaccharide biosynthesis. This is 2-dehydro-3-deoxyphosphooctonate aldolase from Cupriavidus taiwanensis (strain DSM 17343 / BCRC 17206 / CCUG 44338 / CIP 107171 / LMG 19424 / R1) (Ralstonia taiwanensis (strain LMG 19424)).